We begin with the raw amino-acid sequence, 1168 residues long: Transcription-repair-coupling factor (1168 aa).

The 162-residue stretch at 633–794 folds into the Helicase ATP-binding domain; it reads DMQKSRPMDR…MLGVRDLSVI (162 aa). 646-653 serves as a coordination point for ATP; sequence GDVGYGKT. Residues 747–750 carry the DEEQ box motif; it reads DEEQ. The 162-residue stretch at 808 to 969 folds into the Helicase C-terminal domain; the sequence is VLEQNMSFIK…GFKIAMRDLN (162 aa).

It in the N-terminal section; belongs to the UvrB family. The protein in the C-terminal section; belongs to the helicase family. RecG subfamily.

The protein resides in the cytoplasm. Couples transcription and DNA repair by recognizing RNA polymerase (RNAP) stalled at DNA lesions. Mediates ATP-dependent release of RNAP and its truncated transcript from the DNA, and recruitment of nucleotide excision repair machinery to the damaged site. The polypeptide is Transcription-repair-coupling factor (Staphylococcus aureus (strain MSSA476)).